Here is a 521-residue protein sequence, read N- to C-terminus: Serine/threonine-protein kinase A (521 aa).

The 275-residue stretch at 15–289 folds into the Protein kinase domain; sequence YQLVELVGSG…DVIIRAIDAI (275 aa). ATP-binding positions include 21 to 29 and lysine 45; that span reads VGSGAMGQV. Catalysis depends on aspartate 148, which acts as the Proton acceptor.

Belongs to the protein kinase superfamily. Ser/Thr protein kinase family. Post-translationally, autophosphorylated.

The enzyme catalyses L-seryl-[protein] + ATP = O-phospho-L-seryl-[protein] + ADP + H(+). The catalysed reaction is L-threonyl-[protein] + ATP = O-phospho-L-threonyl-[protein] + ADP + H(+). Protein kinase that regulates cellular motility via phosphorylation of membrane proteins. The chain is Serine/threonine-protein kinase A (spkA) from Synechocystis sp. (strain ATCC 27184 / PCC 6803 / Kazusa).